The chain runs to 555 residues: Embryonic protein DC-8 (555 aa).

The segment covering 83–115 has biased composition (basic and acidic residues); that stretch reads RENTDYAYDKGREGGDVAAQKAEEAKEKAKMAK. Disordered regions lie at residues 83-118 and 132-151; these read RENT…KDTT and KAEE…KEKA. A run of 17 repeats spans residues 97–114, 115–125, 126–140, 141–154, 155–176, 177–191, 192–205, 206–216, 217–237, 238–259, 260–281, 282–303, 304–325, 326–343, 344–358, 359–376, and 377–391. The segment at 97–391 is 17 X approximate tandem repeats; it reads GDVAAQKAEE…DTTVGKMTEL (295 aa). The segment at 184 to 204 is disordered; that stretch reads AAEAKDTTAQKAAEAKEKTGE. The span at 444–465 shows a compositional bias: basic and acidic residues; sequence LQEEGVKDEAKQRAEADRETAG. Positions 444–472 are disordered; it reads LQEEGVKDEAKQRAEADRETAGDRGSAAK.

Belongs to the LEA type 4 family.

Its subcellular location is the cytoplasm. It localises to the secreted. The protein localises to the cell wall. Its function is as follows. May play a role in late embryogeny. The sequence is that of Embryonic protein DC-8 from Daucus carota (Wild carrot).